A 364-amino-acid polypeptide reads, in one-letter code: Peptide chain release factor 2 (364 aa).

At glutamine 251 the chain carries N5-methylglutamine.

It belongs to the prokaryotic/mitochondrial release factor family. Methylated by PrmC. Methylation increases the termination efficiency of RF2.

The protein resides in the cytoplasm. Its function is as follows. Peptide chain release factor 2 directs the termination of translation in response to the peptide chain termination codons UGA and UAA. In Campylobacter hominis (strain ATCC BAA-381 / DSM 21671 / CCUG 45161 / LMG 19568 / NCTC 13146 / CH001A), this protein is Peptide chain release factor 2.